Reading from the N-terminus, the 234-residue chain is Leucyl/phenylalanyl-tRNA--protein transferase (234 aa).

This sequence belongs to the L/F-transferase family.

It localises to the cytoplasm. It catalyses the reaction N-terminal L-lysyl-[protein] + L-leucyl-tRNA(Leu) = N-terminal L-leucyl-L-lysyl-[protein] + tRNA(Leu) + H(+). The catalysed reaction is N-terminal L-arginyl-[protein] + L-leucyl-tRNA(Leu) = N-terminal L-leucyl-L-arginyl-[protein] + tRNA(Leu) + H(+). The enzyme catalyses L-phenylalanyl-tRNA(Phe) + an N-terminal L-alpha-aminoacyl-[protein] = an N-terminal L-phenylalanyl-L-alpha-aminoacyl-[protein] + tRNA(Phe). Its function is as follows. Functions in the N-end rule pathway of protein degradation where it conjugates Leu, Phe and, less efficiently, Met from aminoacyl-tRNAs to the N-termini of proteins containing an N-terminal arginine or lysine. This Dechloromonas aromatica (strain RCB) protein is Leucyl/phenylalanyl-tRNA--protein transferase.